A 314-amino-acid polypeptide reads, in one-letter code: Porphobilinogen deaminase (314 aa).

Position 242 is an S-(dipyrrolylmethanemethyl)cysteine (Cys-242).

Belongs to the HMBS family. Monomer. Requires dipyrromethane as cofactor.

It carries out the reaction 4 porphobilinogen + H2O = hydroxymethylbilane + 4 NH4(+). Its pathway is porphyrin-containing compound metabolism; protoporphyrin-IX biosynthesis; coproporphyrinogen-III from 5-aminolevulinate: step 2/4. Tetrapolymerization of the monopyrrole PBG into the hydroxymethylbilane pre-uroporphyrinogen in several discrete steps. This chain is Porphobilinogen deaminase (hemC), found in Bacillus subtilis (strain 168).